Reading from the N-terminus, the 201-residue chain is MESLHYAIALSGGIGTGKSTVASLLRLYGFEVIDADSIAHRLLKEKQKEVVDLFGEGILKEGEIDRKSLGARVFGDPKERARLEALLHPPIRQEILQKAQKLEAKAFPYFIDIPLFFEKRDDYPMVNQTLLIYAPRKLQVERIKKRDSLSMEEIEARLGAQMDIKEKVPMAHYILSNEGNLNDLTQEVERLIETIKKDFHV.

Positions alanine 7 to valine 201 constitute a DPCK domain. Glycine 15 to threonine 20 contacts ATP.

This sequence belongs to the CoaE family.

It is found in the cytoplasm. The enzyme catalyses 3'-dephospho-CoA + ATP = ADP + CoA + H(+). The protein operates within cofactor biosynthesis; coenzyme A biosynthesis; CoA from (R)-pantothenate: step 5/5. Its function is as follows. Catalyzes the phosphorylation of the 3'-hydroxyl group of dephosphocoenzyme A to form coenzyme A. This Wolinella succinogenes (strain ATCC 29543 / DSM 1740 / CCUG 13145 / JCM 31913 / LMG 7466 / NCTC 11488 / FDC 602W) (Vibrio succinogenes) protein is Dephospho-CoA kinase.